Here is a 691-residue protein sequence, read N- to C-terminus: MDGCKKELPRLQEPEEDEDCYILNVQSSSDDTSGSSVARRAPKRQASCILNVQSRSGDTSGSSVARRAPKRQASSVVVIDSDSDEECHTHEEKKAKLLEINSDDESPECCHVKPAIQEPPIVISDDDNDDDNGNDLEVPDDNSDDSEAPDDNSDDSEAPDDNSDDSEAPDDNSDDSEAPDDNSDDSDVPDDNSDDSSDDNSDDSSDDNSDDSDVPDDKSDDSDVPDDSSDDSDVPDDSSDDSEAPDDSSDDSEAPDDSSDDSEAPDDSSDDSEAPDDSSDDSEASDDSSDDSEASDDSSDDSEAPDDKSDDSDVPEDKSDDSDVPDDNSDDLEVPVPAEDLCNEGQIASDEEELVEAAAAVSQHDSSDDAGEQDLGENLSKPPSDPEANPEVSERKLPTEEEPAPVVEQSGKRKSKTKTIVEPPRKRQTKTKNIVEPPRKRQTKTKNIVEPLRKRKAKTKNVSVTPGHKKRGPSKKKPGAAKVEKRKTRTPKCKVPGCFLQDLEKSKKYSGKNLKRNKDELVQRIYDLFNRSVCDKKLPEKLRIGWNNKMVKTAGLCSTGEMWYPKWRRFAKIQIGLKVCDSADRIRDTLIHEMCHAASWLIDGIHDSHGDAWKYYARKSNRIHPELPRVTRCHNYKINYKVHYECTGCKTRIGCYTKSLDTSRFICAKCKGSLVMVPLTQKDGTRIVPHV.

The SUMO interaction motif 1 (SIM) motif lies at 22-25 (ILNV). Residues 25-488 (VQSSSDDTSG…GAAKVEKRKT (464 aa)) are disordered. Residues 27 to 36 (SSSDDTSGSS) show a composition bias toward low complexity. The segment covering 48–63 (CILNVQSRSGDTSGSS) has biased composition (polar residues). 3 short sequence motifs (SUMO interaction motif 1 (SIM)) span residues 76–79 (VVVI), 97–100 (LLEI), and 121–124 (IVIS). The segment covering 86-97 (ECHTHEEKKAKL) has biased composition (basic and acidic residues). Over residues 124 to 333 (SDDDNDDDNG…VPDDNSDDLE (210 aa)) the composition is skewed to acidic residues. Residues 467-488 (GHKKRGPSKKKPGAAKVEKRKT) show a composition bias toward basic residues. Positions 522–677 (VQRIYDLFNR…AKCKGSLVMV (156 aa)) constitute a SprT-like domain.

It belongs to the serine-aspartate repeat-containing protein (SDr) family. In terms of assembly, interacts (via SIM domains) with SUMO2; this interaction allows the GCNA recruitment to DPCs sites. Interacts with TOP2A; this interaction allows the resolution of topoisomerase II (TOP2A) DNA-protein cross-links. Expressed in germ cells of the testis (at protein level). Detected in skeletal muscle, liver, kidney, pancreas, heart, lung and brain. Expressed throughout spermatogenesis, from spermatogonia to elongated spermatids, in normal adult testis (at protein level).

The protein resides in the nucleus. It localises to the PML body. It is found in the chromosome. Its function is as follows. May play a role in DNA-protein cross-links (DPCs) clearance through a SUMO-dependent recruitment to sites of DPCs, ensuring the genomic stability by protecting germ cells and early embryos from various sources of damage. Can resolve the topoisomerase II (TOP2A) DPCs. The chain is Germ cell nuclear acidic protein from Homo sapiens (Human).